Consider the following 261-residue polypeptide: (R)-S-adenosyl-L-methionine hydrolase (261 aa).

Residues D12, D72, and N187 each contribute to the adenosine site. The (R)-S-adenosyl-L-methionine site is built by N187, S231, and V239. V239 serves as a coordination point for adenosine.

The protein belongs to the SAM hydrolase / SAM-dependent halogenase family.

It catalyses the reaction (R)-S-adenosyl-L-methionine + H2O = adenosine + L-methionine + H(+). With respect to regulation, activity is inhibited by chloride. Catalyzes the hydrolysis of S-adenosyl-L-methionine (SAM) into adenosine and L-methionine. Is likely stereoselective, specifically hydrolyzing (R)-S-adenosyl-L-methionine ((R)-SAM), the inactive form of the ubiquitous cofactor SAM, and not the active form of SAM, (S)-S-adenosyl-L-methionine. Probaly plays a role in preventing accumulation of (R)-S-adenosyl-L-methionine in cells; maintenance of (S)-S-denosyl-L-methionine homochirality is important for cellular health given that the (R)-form is largely inactive as a methyl donor and can function as an inhibitor of methyltransferases. Shows very slow iodinase activity in vitro. The protein is (R)-S-adenosyl-L-methionine hydrolase of Salinispora arenicola (strain CNS-205).